The sequence spans 555 residues: Cytochrome P450 monooxygenase abl2 (555 aa).

The next 2 membrane-spanning stretches (helical) occupy residues 38–58 (SFDL…ALFI) and 141–161 (VFIG…APLA). Residues N325 and N360 are each glycosylated (N-linked (GlcNAc...) asparagine). C489 provides a ligand contact to heme.

This sequence belongs to the cytochrome P450 family. Heme is required as a cofactor.

Its subcellular location is the membrane. It functions in the pathway hormone biosynthesis. Functionally, cytochrome P450 monooxygenase; part of the gene cluster that mediates the biosynthesis of abscisic acid (ABA), a phytohormone that acts antagonistically toward salicylic acid (SA), jasmonic acid (JA) and ethylene (ETH) signaling, to impede plant defense responses. The first step of the pathway catalyzes the reaction from farnesyl diphosphate to alpha-ionylideneethane performed by the alpha-ionylideneethane synthase abl3 via a three-step reaction mechanism involving 2 neutral intermediates, beta-farnesene and allofarnesene. The cytochrome P450 monooxygenase abl1 might then be involved in the conversion of alpha-ionylideneethane to alpha-ionylideneacetic acid. Alpha-ionylideneacetic acid is further converted to abscisic acid in 2 steps involving the cytochrome P450 monooxygenase abl2 and the short-chain dehydrogenase/reductase abl4, via the intermediates 1'-deoxy-ABA or 1',4'-trans-diol-ABA, depending on the order of action of these 2 enzymes. Abl2 is responsible for the hydroxylation of carbon atom C-1' and abl4 might be involved in the oxidation of the C-4' carbon atom. The polypeptide is Cytochrome P450 monooxygenase abl2 (Leptosphaeria maculans (strain JN3 / isolate v23.1.3 / race Av1-4-5-6-7-8) (Blackleg fungus)).